We begin with the raw amino-acid sequence, 114 residues long: Large ribosomal subunit protein uL18 (114 aa).

Belongs to the universal ribosomal protein uL18 family. As to quaternary structure, part of the 50S ribosomal subunit; part of the 5S rRNA/L5/L18/L25 subcomplex. Contacts the 5S and 23S rRNAs.

Functionally, this is one of the proteins that bind and probably mediate the attachment of the 5S RNA into the large ribosomal subunit, where it forms part of the central protuberance. This Porphyromonas gingivalis (strain ATCC 33277 / DSM 20709 / CIP 103683 / JCM 12257 / NCTC 11834 / 2561) protein is Large ribosomal subunit protein uL18.